The primary structure comprises 164 residues: Small ribosomal subunit protein uS5 (164 aa).

An S5 DRBM domain is found at 10-73 (LEERVVAINR…EAAKKNLIEV (64 aa)).

This sequence belongs to the universal ribosomal protein uS5 family. As to quaternary structure, part of the 30S ribosomal subunit. Contacts proteins S4 and S8.

With S4 and S12 plays an important role in translational accuracy. Its function is as follows. Located at the back of the 30S subunit body where it stabilizes the conformation of the head with respect to the body. In Streptococcus thermophilus (strain CNRZ 1066), this protein is Small ribosomal subunit protein uS5.